A 586-amino-acid polypeptide reads, in one-letter code: Asparagine synthetase [glutamine-hydrolyzing] (586 aa).

Cysteine 2 acts as the For GATase activity in catalysis. Residues 2 to 185 (CGILAVLGVV…PGHLYSSKTG (184 aa)) enclose the Glutamine amidotransferase type-2 domain. Residues 50-54 (RLAII), 75-77 (NGE), and aspartate 98 each bind L-glutamine. In terms of domain architecture, Asparagine synthetase spans 193–516 (PPWFSETVPS…PQDSARETVP (324 aa)). ATP-binding positions include leucine 231, isoleucine 267, and 341-342 (SG).

It carries out the reaction L-aspartate + L-glutamine + ATP + H2O = L-asparagine + L-glutamate + AMP + diphosphate + H(+). Its pathway is amino-acid biosynthesis; L-asparagine biosynthesis; L-asparagine from L-aspartate (L-Gln route): step 1/1. Its function is as follows. Essential for nitrogen assimilation, distribution and remobilization within the plant via the phloem. The polypeptide is Asparagine synthetase [glutamine-hydrolyzing] (ASN1) (Zea mays (Maize)).